The primary structure comprises 105 residues: Neuropeptide-like protein 32 (105 aa).

Positions 1-22 (MRQFNLLLVFCLIALTALPVFS) are cleaved as a signal peptide. The propeptide occupies 23–54 (FPNGLTMDSIDMEPMGAFDENGAADESPRVKR). G59 is modified (glycine amide). W64 carries the post-translational modification Tryptophan amide. Residues G68, G73, and G80 each carry the glycine amide modification. The residue at position 86 (W86) is a Tryptophan amide. 2 positions are modified to glycine amide: G91 and G98. The residue at position 103 (W103) is a Tryptophan amide.

It belongs to the YARP (YGGW-amide related peptide) family.

Its subcellular location is the secreted. In terms of biological role, may have antimicrobial activity. The protein is Neuropeptide-like protein 32 (nlp-32) of Caenorhabditis elegans.